The following is a 1411-amino-acid chain: Protein three rows (1411 aa).

The tract at residues 1065–1071 (VEPIRKQ) is separase cleavage-site. Disordered stretches follow at residues 1221 to 1240 (LEPP…NISP), 1268 to 1301 (VRPA…KSPK), and 1330 to 1411 (AKST…RHRN). Composition is skewed to low complexity over residues 1270–1289 (PASS…NASS) and 1386–1398 (TAEQ…TATP).

As to quaternary structure, interacts with pim and Sse. Cleavage of thr contributes to inactivation of Sse.

The protein localises to the cytoplasm. Functionally, required specifically for chromosome disjunction during all mitoses; maternally provided protein is sufficient until mitosis 14 then zygotic protein is required. Involved in formation and/or maintenance of epithelial structures: bud extension during Malpighian tubule development, and foregut and hindgut morphogenesis. The chain is Protein three rows (thr) from Drosophila virilis (Fruit fly).